A 320-amino-acid polypeptide reads, in one-letter code: Cytochrome f (320 aa).

An N-terminal signal peptide occupies residues 1–35 (MQTRNTFSWIREEITRSISVSLMIYIITWASISSA). Tyr36, Cys56, Cys59, and His60 together coordinate heme. The helical transmembrane segment at 286-306 (VQGLLFFLGSVVLAQIFLVLK) threads the bilayer.

This sequence belongs to the cytochrome f family. As to quaternary structure, the 4 large subunits of the cytochrome b6-f complex are cytochrome b6, subunit IV (17 kDa polypeptide, petD), cytochrome f and the Rieske protein, while the 4 small subunits are PetG, PetL, PetM and PetN. The complex functions as a dimer. Heme is required as a cofactor.

Its subcellular location is the plastid. The protein resides in the chloroplast thylakoid membrane. Its function is as follows. Component of the cytochrome b6-f complex, which mediates electron transfer between photosystem II (PSII) and photosystem I (PSI), cyclic electron flow around PSI, and state transitions. This Crucihimalaya wallichii (Rock-cress) protein is Cytochrome f.